Reading from the N-terminus, the 150-residue chain is Photosystem II extrinsic protein V (150 aa).

The first 20 residues, 1-20 (MIRVIMLLVLVWMTPMISWA), serve as a signal peptide directing secretion. Positions 50, 53, 54, and 105 each coordinate heme c.

This sequence belongs to the cytochrome c family. PsbV subfamily. In terms of assembly, PSII is composed of 1 copy each of membrane proteins PsbA, PsbB, PsbC, PsbD, PsbE, PsbF, PsbH, PsbI, PsbJ, PsbK, PsbL, PsbM, PsbT, PsbY, PsbZ, Psb30/Ycf12, at least 3 peripheral proteins of the oxygen-evolving complex and a large number of cofactors. It forms dimeric complexes. The extrinsic subunits in red algae are PsbO (OEC33), PsbQ', cytochrome c-550 and PsbU. Heme c serves as cofactor.

The protein resides in the plastid. Its subcellular location is the chloroplast thylakoid membrane. In terms of biological role, one of the extrinsic, lumenal subunits of photosystem II (PSII). PSII is a light-driven water plastoquinone oxidoreductase, using light energy to abstract electrons from H(2)O, generating a proton gradient subsequently used for ATP formation. The extrinsic proteins stabilize the structure of photosystem II oxygen-evolving complex (OEC), the ion environment of oxygen evolution and protect the OEC against heat-induced inactivation. The polypeptide is Photosystem II extrinsic protein V (Cyanidioschyzon merolae (strain NIES-3377 / 10D) (Unicellular red alga)).